An 869-amino-acid polypeptide reads, in one-letter code: 1-phosphatidylinositol 4,5-bisphosphate phosphodiesterase 1 (869 aa).

The EF-hand domain occupies 269 to 304 (VSTGQLLEFFQLADINHNGLLNYFEFEKFIKILKNR). Ca(2+) is bound by residues Asp282, Asn284, Asn286, and Glu293. The PI-PLC X-box domain occupies 382–520 (YSKPLNHYFI…LKHKILLKSK (139 aa)). Residues His395 and His439 contribute to the active site. Residues Lys518 and Lys520 each contribute to the substrate site. Residues 546–571 (ANEQELRMKDDSTNSSSATNSSSMQR) form a disordered region. Positions 558-568 (TNSSSATNSSS) are enriched in low complexity. A PI-PLC Y-box domain is found at 590–709 (ISGIHGIKFR…SGYVLKPKKL (120 aa)). The substrate site is built by Ser614 and Arg643. The C2 domain maps to 713 to 862 (VTKAKMIPLI…EGEQYIFCTL (150 aa)).

As to quaternary structure, interacts with SGD1. The cofactor is Ca(2+).

The enzyme catalyses a 1,2-diacyl-sn-glycero-3-phospho-(1D-myo-inositol-4,5-bisphosphate) + H2O = 1D-myo-inositol 1,4,5-trisphosphate + a 1,2-diacyl-sn-glycerol + H(+). Its function is as follows. The production of the second messenger molecules diacylglycerol (DAG) and inositol 1,4,5-trisphosphate (IP3) is mediated by activated phosphatidylinositol-specific phospholipase C enzymes. Required for cell growth, osmoresistance and expression of GPD1. In Saccharomyces cerevisiae (strain ATCC 204508 / S288c) (Baker's yeast), this protein is 1-phosphatidylinositol 4,5-bisphosphate phosphodiesterase 1 (PLC1).